The chain runs to 1099 residues: Contactin-5 (1099 aa).

Residues 1–18 (MASSWRLILFLSFTSCLS) form the signal peptide. 6 consecutive Ig-like C2-type domains span residues 99-190 (PVFV…ATLQ), 196-282 (NFSG…RVLS), 300-385 (PKIE…GQLQ), 390-474 (PHWV…AELK), 480-569 (PSFE…VSVK), and 571-660 (PTRI…DSVS). Cys-123 and Cys-173 are disulfide-bonded. Residues Asn-138 and Asn-196 are each glycosylated (N-linked (GlcNAc...) asparagine). 2 disulfide bridges follow: Cys-217/Cys-269 and Cys-322/Cys-369. N-linked (GlcNAc...) asparagine glycans are attached at residues Asn-397, Asn-449, and Asn-540. 3 disulfide bridges follow: Cys-411–Cys-458, Cys-503–Cys-551, and Cys-593–Cys-650. Fibronectin type-III domains are found at residues 673-771 (PPGV…TNEA), 776-873 (APSN…SAEG), 878-972 (APTD…TKRH), and 977-1067 (PPGN…SYAG). Asn-779, Asn-816, and Asn-931 each carry an N-linked (GlcNAc...) asparagine glycan. Residues 958–983 (YGPPSREVSATTKRHPPSEPPGNLRW) form a disordered region. Asn-1002 carries N-linked (GlcNAc...) asparagine glycosylation. A lipid anchor (GPI-anchor amidated serine) is attached at Ser-1072. A propeptide spans 1073-1099 (AQSTLHSLSKWSSVTLLLALMLPSSSW) (removed in mature form).

Belongs to the immunoglobulin superfamily. Contactin family. Interacts with PTPRG. Specifically expressed in the nervous system. Expressed in cerebrum and cerebellum but at low level in spinal cord. In brain, it is expressed in highly restricted regions at postnatal day 7, such as the auditory pathway, including the cochlear nucleus, superior olive, inferior colliculus, medial geniculate nucleus and auditory cortex. Expressed in the accessory olfactory bulb, glomerular and mitral cell layers in the olfactory bulb, anterior thalamic nuclei, layers II-IV of the cerebral cortex, dentate gyrus of the hippocampus and external granule cells and Purkinje cells of the cerebellum. Also expressed in the piriform cortex, inferior olive and facial nucleus. Weakly or not expressed in other parts of the brain.

The protein localises to the cell membrane. Its function is as follows. Contactins mediate cell surface interactions during nervous system development. Has some neurite outgrowth-promoting activity in the cerebral cortical neurons but not in hippocampal neurons. Probably involved in neuronal activity in the auditory system. This Rattus norvegicus (Rat) protein is Contactin-5 (Cntn5).